The sequence spans 125 residues: SOSS complex subunit C homolog B (125 aa).

Disordered regions lie at residues P44 to F73 and P105 to K125.

This sequence belongs to the SOSS-C family.

This chain is SOSS complex subunit C homolog B, found in Drosophila willistoni (Fruit fly).